We begin with the raw amino-acid sequence, 564 residues long: Eukaryotic translation initiation factor 3 subunit L (564 aa).

Serine 2 carries the N-acetylserine modification. The region spanning 331–537 (DAIRVFANIL…IHIADTKVAR (207 aa)) is the PCI domain. Residues lysine 465 and lysine 549 each carry the N6-acetyllysine modification.

This sequence belongs to the eIF-3 subunit L family. In terms of assembly, component of the eukaryotic translation initiation factor 3 (eIF-3) complex, which is composed of 13 subunits: EIF3A, EIF3B, EIF3C, EIF3D, EIF3E, EIF3F, EIF3G, EIF3H, EIF3I, EIF3J, EIF3K, EIF3L and EIF3M. The eIF-3 complex appears to include 3 stable modules: module A is composed of EIF3A, EIF3B, EIF3G and EIF3I; module B is composed of EIF3F, EIF3H, and EIF3M; and module C is composed of EIF3C, EIF3D, EIF3E, EIF3K and EIF3L. EIF3C of module C binds EIF3B of module A and EIF3H of module B, thereby linking the three modules. EIF3J is a labile subunit that binds to the eIF-3 complex via EIF3B. The eIF-3 complex interacts with RPS6KB1 under conditions of nutrient depletion. Mitogenic stimulation leads to binding and activation of a complex composed of MTOR and RPTOR, leading to phosphorylation and release of RPS6KB1 and binding of EIF4B to eIF-3. Interacts with RRN3.

It is found in the cytoplasm. Component of the eukaryotic translation initiation factor 3 (eIF-3) complex, which is required for several steps in the initiation of protein synthesis. The eIF-3 complex associates with the 40S ribosome and facilitates the recruitment of eIF-1, eIF-1A, eIF-2:GTP:methionyl-tRNAi and eIF-5 to form the 43S pre-initiation complex (43S PIC). The eIF-3 complex stimulates mRNA recruitment to the 43S PIC and scanning of the mRNA for AUG recognition. The eIF-3 complex is also required for disassembly and recycling of post-termination ribosomal complexes and subsequently prevents premature joining of the 40S and 60S ribosomal subunits prior to initiation. The eIF-3 complex specifically targets and initiates translation of a subset of mRNAs involved in cell proliferation, including cell cycling, differentiation and apoptosis, and uses different modes of RNA stem-loop binding to exert either translational activation or repression. This Bos taurus (Bovine) protein is Eukaryotic translation initiation factor 3 subunit L.